A 191-amino-acid polypeptide reads, in one-letter code: Phosphoheptose isomerase (191 aa).

Residues 34–191 enclose the SIS domain; the sequence is IATALKDGNK…LVEEMVCERS (158 aa). 49–51 provides a ligand contact to substrate; the sequence is NGG. Zn(2+)-binding residues include H58 and E62. Substrate contacts are provided by residues E62, 91–92, 117–119, S122, and Q169; these read ND and TTS. Residues Q169 and H177 each coordinate Zn(2+).

The protein belongs to the SIS family. GmhA subfamily. It depends on Zn(2+) as a cofactor.

The protein resides in the cytoplasm. The enzyme catalyses 2 D-sedoheptulose 7-phosphate = D-glycero-alpha-D-manno-heptose 7-phosphate + D-glycero-beta-D-manno-heptose 7-phosphate. The protein operates within carbohydrate biosynthesis; D-glycero-D-manno-heptose 7-phosphate biosynthesis; D-glycero-alpha-D-manno-heptose 7-phosphate and D-glycero-beta-D-manno-heptose 7-phosphate from sedoheptulose 7-phosphate: step 1/1. Catalyzes the isomerization of sedoheptulose 7-phosphate in D-glycero-D-manno-heptose 7-phosphate. This chain is Phosphoheptose isomerase, found in Aquifex aeolicus (strain VF5).